Here is a 255-residue protein sequence, read N- to C-terminus: 3-oxo-5-alpha-steroid 4-dehydrogenase 1 (255 aa).

Helical transmembrane passes span 6–26 (LCLLDALVYLEGFLAFVAFVG), 82–102 (VLLAMFLIHYVQRTLVFPVLI), 107–127 (PTLLFTFVLAFLFCTLNGYLQ), 142–162 (VTHPCFLTGFALWLVGMVINI), and 205–225 (FALASWSLQGVVFALFTLCAL).

The protein belongs to the steroid 5-alpha reductase family.

The protein resides in the microsome membrane. The protein localises to the endoplasmic reticulum membrane. It carries out the reaction a 3-oxo-5alpha-steroid + NADP(+) = a 3-oxo-Delta(4)-steroid + NADPH + H(+). The catalysed reaction is 5alpha-pregnane-3,20-dione + NADP(+) = progesterone + NADPH + H(+). It catalyses the reaction 17beta-hydroxy-5alpha-androstan-3-one + NADP(+) = testosterone + NADPH + H(+). The enzyme catalyses androst-4-ene-3,17-dione + NADPH + H(+) = 5alpha-androstan-3,17-dione + NADP(+). Its function is as follows. Converts testosterone into 5-alpha-dihydrotestosterone and progesterone or corticosterone into their corresponding 5-alpha-3-oxosteroids. It plays a central role in sexual differentiation and androgen physiology. The sequence is that of 3-oxo-5-alpha-steroid 4-dehydrogenase 1 from Mus musculus (Mouse).